Consider the following 120-residue polypeptide: Large ribosomal subunit protein bL17 (120 aa).

Belongs to the bacterial ribosomal protein bL17 family. In terms of assembly, part of the 50S ribosomal subunit. Contacts protein L32.

The polypeptide is Large ribosomal subunit protein bL17 (Bacillus cereus (strain ATCC 14579 / DSM 31 / CCUG 7414 / JCM 2152 / NBRC 15305 / NCIMB 9373 / NCTC 2599 / NRRL B-3711)).